We begin with the raw amino-acid sequence, 527 residues long: MTMTSLDIILFISAIVFLSIYYYNLFSNAKRSNGLKLPPGPKGYPVLGNLPQLGAKPHQALQAFSRVYGPLMRLRLGSVDLVVASSPSVAAQFLKNDSNFCARPPNSGAEHMAFNYHDLVFAPYGPRWRLLRKLSAVHLLGPKALDDNQNVREEELAVLARMLYERSRGGEPVNVGKEMHVCSTNALSRAMMGRRVFEKLAVGGGGVEEEEEMKKAEEFKDMVVEVMTLAGVFNIGDFVPWLKPFDIQGVVRKMKRVHRRYNVFLDKFIAECRSSAKPGANDLLSVLIGQRGKSDGSGGEITDTAIKALVLNLLTAGTDTSSSTIEWALTELIRHPDILKKAQQEIDSAVGRDRLVTESDVPKLPYLQAIVKENFRMHPATPLSLPRMSIEECDIGGYHIPKNSTLFVNIWAMGRDPSIWPDPMEFRPSRFLPGGQGEHLEVRGNHFELMPFGAGRRICAGTSMGIRVVHSTVATLIHAFDWKLPEGLTAEKIDMEEAFGISLQKAIPLMAHPIPRLAPKAYSPKMK.

A helical membrane pass occupies residues 6–26; sequence LDIILFISAIVFLSIYYYNLF. Residue Cys459 coordinates heme.

Belongs to the cytochrome P450 family. It depends on heme as a cofactor. Expressed in young cromes.

It is found in the membrane. It catalyses the reaction a 3',5'-unsubstituted flavanone + 2 reduced [NADPH--hemoprotein reductase] + 2 O2 = a 3',5'-dihydroxyflavanone + 2 oxidized [NADPH--hemoprotein reductase] + 2 H2O + 2 H(+). It carries out the reaction (2S)-naringenin + 2 reduced [NADPH--hemoprotein reductase] + 2 O2 = (2S)-dihydrotricetin + 2 oxidized [NADPH--hemoprotein reductase] + 2 H2O + 2 H(+). The enzyme catalyses (2R,3R)-dihydrokaempferol + 2 reduced [NADPH--hemoprotein reductase] + 2 O2 = (2R,3R)-dihydromyricetin + 2 oxidized [NADPH--hemoprotein reductase] + 2 H2O + 2 H(+). The catalysed reaction is kaempferol + 2 reduced [NADPH--hemoprotein reductase] + 2 O2 = myricetin + 2 oxidized [NADPH--hemoprotein reductase] + 2 H2O + 2 H(+). Its pathway is flavonoid metabolism. Functionally, flavonoid 3',5'-hydroxylase that catalyzes the 3'- and 5'-hydroxylation of flavanones, dihydroflavonols and flavonols. Converts narigenin to dihydrotricetin, dihydrokaempferol to dihydromyricetin and kaempferol to myricetin. This Crocosmia x crocosmiiflora (Montbretia) protein is Flavonoid 3',5'-hydroxylase CYP75B138.